We begin with the raw amino-acid sequence, 284 residues long: 4-diphosphocytidyl-2-C-methyl-D-erythritol kinase (284 aa).

Lys14 is an active-site residue. 98-108 contributes to the ATP binding site; the sequence is PMGGGLGGGSS. Residue Asp140 is part of the active site.

The protein belongs to the GHMP kinase family. IspE subfamily.

It carries out the reaction 4-CDP-2-C-methyl-D-erythritol + ATP = 4-CDP-2-C-methyl-D-erythritol 2-phosphate + ADP + H(+). It functions in the pathway isoprenoid biosynthesis; isopentenyl diphosphate biosynthesis via DXP pathway; isopentenyl diphosphate from 1-deoxy-D-xylulose 5-phosphate: step 3/6. In terms of biological role, catalyzes the phosphorylation of the position 2 hydroxy group of 4-diphosphocytidyl-2C-methyl-D-erythritol. This chain is 4-diphosphocytidyl-2-C-methyl-D-erythritol kinase, found in Shewanella oneidensis (strain ATCC 700550 / JCM 31522 / CIP 106686 / LMG 19005 / NCIMB 14063 / MR-1).